A 363-amino-acid polypeptide reads, in one-letter code: Serpentine receptor class beta-17 (363 aa).

7 consecutive transmembrane segments (helical) span residues 46 to 66 (AFLL…GSII), 75 to 95 (LLAF…SCFL), 120 to 140 (VILA…SMLC), 169 to 189 (IGFV…LYMY), 214 to 234 (YIFI…IGLY), 273 to 293 (CAQL…RIFL), and 304 to 324 (VTEF…ICIV).

The protein belongs to the nematode receptor-like protein srb family.

The protein resides in the membrane. The chain is Serpentine receptor class beta-17 (srb-17) from Caenorhabditis elegans.